The primary structure comprises 284 residues: Bifunctional protein FolD (284 aa).

NADP(+) is bound by residues 166 to 168 and Ile232; that span reads GAS.

Belongs to the tetrahydrofolate dehydrogenase/cyclohydrolase family. Homodimer.

The catalysed reaction is (6R)-5,10-methylene-5,6,7,8-tetrahydrofolate + NADP(+) = (6R)-5,10-methenyltetrahydrofolate + NADPH. It catalyses the reaction (6R)-5,10-methenyltetrahydrofolate + H2O = (6R)-10-formyltetrahydrofolate + H(+). It participates in one-carbon metabolism; tetrahydrofolate interconversion. Catalyzes the oxidation of 5,10-methylenetetrahydrofolate to 5,10-methenyltetrahydrofolate and then the hydrolysis of 5,10-methenyltetrahydrofolate to 10-formyltetrahydrofolate. The chain is Bifunctional protein FolD from Shewanella oneidensis (strain ATCC 700550 / JCM 31522 / CIP 106686 / LMG 19005 / NCIMB 14063 / MR-1).